Here is a 175-residue protein sequence, read N- to C-terminus: ATP synthase subunit b (175 aa).

A helical membrane pass occupies residues 14–34 (LNPNPGLIFWTALTFLIVLVI).

The protein belongs to the ATPase B chain family. As to quaternary structure, F-type ATPases have 2 components, F(1) - the catalytic core - and F(0) - the membrane proton channel. F(1) has five subunits: alpha(3), beta(3), gamma(1), delta(1), epsilon(1). F(0) has four main subunits: a(1), b(2) and c(10-14). The alpha and beta chains form an alternating ring which encloses part of the gamma chain. F(1) is attached to F(0) by a central stalk formed by the gamma and epsilon chains, while a peripheral stalk is formed by the delta and b chains.

It is found in the cell inner membrane. F(1)F(0) ATP synthase produces ATP from ADP in the presence of a proton or sodium gradient. F-type ATPases consist of two structural domains, F(1) containing the extramembraneous catalytic core and F(0) containing the membrane proton channel, linked together by a central stalk and a peripheral stalk. During catalysis, ATP synthesis in the catalytic domain of F(1) is coupled via a rotary mechanism of the central stalk subunits to proton translocation. Its function is as follows. Component of the F(0) channel, it forms part of the peripheral stalk, linking F(1) to F(0). The protein is ATP synthase subunit b of Chlorobaculum tepidum (strain ATCC 49652 / DSM 12025 / NBRC 103806 / TLS) (Chlorobium tepidum).